The chain runs to 245 residues: 4-hydroxy-tetrahydrodipicolinate reductase (245 aa).

NAD(+) is bound by residues 7–12 (GARGKV), 75–77 (GTT), and 102–105 (APNF). The Proton donor/acceptor role is filled by His-132. His-133 is a binding site for (S)-2,3,4,5-tetrahydrodipicolinate. Catalysis depends on Lys-136, which acts as the Proton donor. 142-143 (GT) is a binding site for (S)-2,3,4,5-tetrahydrodipicolinate.

Belongs to the DapB family.

The protein resides in the cytoplasm. The enzyme catalyses (S)-2,3,4,5-tetrahydrodipicolinate + NAD(+) + H2O = (2S,4S)-4-hydroxy-2,3,4,5-tetrahydrodipicolinate + NADH + H(+). It catalyses the reaction (S)-2,3,4,5-tetrahydrodipicolinate + NADP(+) + H2O = (2S,4S)-4-hydroxy-2,3,4,5-tetrahydrodipicolinate + NADPH + H(+). Its pathway is amino-acid biosynthesis; L-lysine biosynthesis via DAP pathway; (S)-tetrahydrodipicolinate from L-aspartate: step 4/4. Its function is as follows. Catalyzes the conversion of 4-hydroxy-tetrahydrodipicolinate (HTPA) to tetrahydrodipicolinate. The protein is 4-hydroxy-tetrahydrodipicolinate reductase of Mycolicibacterium smegmatis (strain ATCC 700084 / mc(2)155) (Mycobacterium smegmatis).